A 306-amino-acid chain; its full sequence is tRNA pseudouridine synthase B (306 aa).

The active-site Nucleophile is D46.

The protein belongs to the pseudouridine synthase TruB family. Type 1 subfamily.

It carries out the reaction uridine(55) in tRNA = pseudouridine(55) in tRNA. Functionally, responsible for synthesis of pseudouridine from uracil-55 in the psi GC loop of transfer RNAs. The chain is tRNA pseudouridine synthase B from Gluconacetobacter diazotrophicus (strain ATCC 49037 / DSM 5601 / CCUG 37298 / CIP 103539 / LMG 7603 / PAl5).